A 748-amino-acid chain; its full sequence is Formate acetyltransferase (748 aa).

A PFL domain is found at 5–618 (NNHTNAWQGF…KTGNTPDGRK (614 aa)). Residue C412 is the S-acetylcysteine intermediate of the active site. The active-site Cysteine radical intermediate is C413. The region spanning 625-748 (PGANPMHGRD…VISRTFHESM (124 aa)) is the Glycine radical domain. The residue at position 723 (G723) is a Glycine radical.

Belongs to the glycyl radical enzyme (GRE) family. PFL subfamily. As to quaternary structure, homodimer.

It localises to the cytoplasm. It catalyses the reaction formate + acetyl-CoA = pyruvate + CoA. Its pathway is fermentation; pyruvate fermentation; formate from pyruvate: step 1/1. In terms of biological role, catalyzes the conversion of pyruvate to formate and acetyl-CoA. The chain is Formate acetyltransferase (pflB) from Staphylococcus epidermidis (strain ATCC 12228 / FDA PCI 1200).